A 248-amino-acid polypeptide reads, in one-letter code: Adenosylcobinamide-GDP ribazoletransferase (248 aa).

8 consecutive transmembrane segments (helical) span residues 24–44 (EVNLKKGSALLPFVGLIIGAW), 47–67 (LVFTLVALVMPLPVAIIAGLF), 70–90 (IIITGGFHVDALADTADGLFS), 106–126 (VGANGVIAICFYFLFYGALFL), 134–154 (IGWLFFVLPIVAKGVTMLLFA), 165–185 (LGSIFLGVPWWPIAISQLFVL), 186–206 (FILGLVFSYIGLLAYAGVILF), and 228–248 (AGGQMGQLVCLFCLVLVWGLI).

It belongs to the CobS family. Requires Mg(2+) as cofactor.

It localises to the cell membrane. It carries out the reaction alpha-ribazole + adenosylcob(III)inamide-GDP = adenosylcob(III)alamin + GMP + H(+). The enzyme catalyses alpha-ribazole 5'-phosphate + adenosylcob(III)inamide-GDP = adenosylcob(III)alamin 5'-phosphate + GMP + H(+). It participates in cofactor biosynthesis; adenosylcobalamin biosynthesis; adenosylcobalamin from cob(II)yrinate a,c-diamide: step 7/7. In terms of biological role, joins adenosylcobinamide-GDP and alpha-ribazole to generate adenosylcobalamin (Ado-cobalamin). Also synthesizes adenosylcobalamin 5'-phosphate from adenosylcobinamide-GDP and alpha-ribazole 5'-phosphate. This chain is Adenosylcobinamide-GDP ribazoletransferase, found in Listeria welshimeri serovar 6b (strain ATCC 35897 / DSM 20650 / CCUG 15529 / CIP 8149 / NCTC 11857 / SLCC 5334 / V8).